The primary structure comprises 173 residues: MAEKRNIFLVGPMGAGKSTIGRQLAQQLNMEFYDSDQEIEKRTGADVGWVFDVEGEDGFRNREEKVINELTEKQGIVLATGGGSVKSRETRNRLSARGVVVYLETTIEKQLARTQRDKKRPLLQVEAPPREVLEALANERNPLYEEIADVTIRTDDQSAKVVANQIIHMLESN.

14–19 (GAGKST) serves as a coordination point for ATP. Residue Ser18 coordinates Mg(2+). Substrate contacts are provided by Asp36, Arg60, and Gly82. Position 120 (Arg120) interacts with ATP. Arg140 contacts substrate. An ATP-binding site is contributed by Gln157.

The protein belongs to the shikimate kinase family. As to quaternary structure, monomer. Requires Mg(2+) as cofactor.

The protein localises to the cytoplasm. It carries out the reaction shikimate + ATP = 3-phosphoshikimate + ADP + H(+). Its pathway is metabolic intermediate biosynthesis; chorismate biosynthesis; chorismate from D-erythrose 4-phosphate and phosphoenolpyruvate: step 5/7. Its function is as follows. Catalyzes the specific phosphorylation of the 3-hydroxyl group of shikimic acid using ATP as a cosubstrate. This is Shikimate kinase 1 from Salmonella typhimurium (strain LT2 / SGSC1412 / ATCC 700720).